Reading from the N-terminus, the 181-residue chain is Large ribosomal subunit protein uL5 (181 aa).

Belongs to the universal ribosomal protein uL5 family. In terms of assembly, part of the 50S ribosomal subunit; part of the 5S rRNA/L5/L18/L25 subcomplex. Contacts the 5S rRNA and the P site tRNA. Forms a bridge to the 30S subunit in the 70S ribosome.

In terms of biological role, this is one of the proteins that bind and probably mediate the attachment of the 5S RNA into the large ribosomal subunit, where it forms part of the central protuberance. In the 70S ribosome it contacts protein S13 of the 30S subunit (bridge B1b), connecting the 2 subunits; this bridge is implicated in subunit movement. Contacts the P site tRNA; the 5S rRNA and some of its associated proteins might help stabilize positioning of ribosome-bound tRNAs. This Picosynechococcus sp. (strain ATCC 27264 / PCC 7002 / PR-6) (Agmenellum quadruplicatum) protein is Large ribosomal subunit protein uL5.